Reading from the N-terminus, the 532-residue chain is BEL1-like homeodomain protein 6 (532 aa).

Residues 144 to 160 (SKYLKAAQQLLDEAVNV) are SR/KY domain. The disordered stretch occupies residues 170 to 203 (EGDKNNENPQEPNQSTQDSSTNPPADISQSERQE). A compositionally biased stretch (polar residues) spans 176–197 (ENPQEPNQSTQDSSTNPPADIS). Positions 200–271 (ERQEMQSKLT…SLRDAISGQI (72 aa)) are BELL domain. The homeobox DNA-binding region spans 314-376 (AWRPQRGLPE…NARVRLWKPM (63 aa)). The segment at 385–434 (FTENDSNSSSENTPKMSEIGPVAADDEDRAREFSQDQTKPDHGHGYGEET) is disordered. The span at 412-434 (DRAREFSQDQTKPDHGHGYGEET) shows a compositional bias: basic and acidic residues.

Belongs to the TALE/BELL homeobox family. May form heterodimeric complexes with TALE/KNOX proteins. Interacts with OFP2, OFP4, and OFP5.

It is found in the nucleus. The chain is BEL1-like homeodomain protein 6 (BLH6) from Arabidopsis thaliana (Mouse-ear cress).